Consider the following 346-residue polypeptide: Methylthioribose-1-phosphate isomerase (346 aa).

Residues 47–49, Arg-88, and Gln-195 contribute to the substrate site; that span reads RGA. The Proton donor role is filled by Asp-236. 246–247 contributes to the substrate binding site; that stretch reads NK.

This sequence belongs to the eIF-2B alpha/beta/delta subunits family. MtnA subfamily.

It carries out the reaction 5-(methylsulfanyl)-alpha-D-ribose 1-phosphate = 5-(methylsulfanyl)-D-ribulose 1-phosphate. It participates in amino-acid biosynthesis; L-methionine biosynthesis via salvage pathway; L-methionine from S-methyl-5-thio-alpha-D-ribose 1-phosphate: step 1/6. In terms of biological role, catalyzes the interconversion of methylthioribose-1-phosphate (MTR-1-P) into methylthioribulose-1-phosphate (MTRu-1-P). The sequence is that of Methylthioribose-1-phosphate isomerase from Maridesulfovibrio salexigens (strain ATCC 14822 / DSM 2638 / NCIMB 8403 / VKM B-1763) (Desulfovibrio salexigens).